The sequence spans 522 residues: Amphoterin-induced protein 2 (522 aa).

Positions 1–39 (MSLRVHTLPTLLGAVVRPGCRELLCLLMITVAVGPGASG) are cleaved as a signal peptide. An LRRNT domain is found at 40 to 68 (VCPTACICATDIVSCTNKHLSKVPGNLFR). Over 40–398 (VCPTACICAT…RSHAHEAFNT (359 aa)) the chain is Extracellular. Disulfide bonds link cysteine 41-cysteine 47 and cysteine 45-cysteine 54. LRR repeat units follow at residues 69 to 90 (LMKR…WIPV), 94 to 115 (KLNT…SFST), 118 to 139 (NLKC…VFQE), 142 to 163 (VLEV…AFGG), 166 to 187 (QLQK…LYVG), and 193 to 214 (ELMF…HINL). Asparagine 104 is a glycosylation site (N-linked (GlcNAc...) asparagine). The LRRCT domain maps to 228–284 (NPFVCDCSLYSLLVFWYRRHFSSVMDFKNDYTCRLWSDSRHSRQVLLLQDSFMNCSD). 2 disulfides stabilise this stretch: cysteine 232–cysteine 260 and cysteine 234–cysteine 282. N-linked (GlcNAc...) asparagine glycosylation is found at asparagine 281, asparagine 288, asparagine 345, asparagine 373, asparagine 381, and asparagine 384. Residues 289-379 (GSFRALGFIH…RLLNETVDVT (91 aa)) enclose the Ig-like C2-type domain. Cysteine 310 and cysteine 363 form a disulfide bridge. The chain crosses the membrane as a helical span at residues 399-419 (AFTTLAACVASIVLVLLYLYL). At 420–522 (TPCPCKCKTK…FSDTPFVAST (103 aa)) the chain is on the cytoplasmic side. The tract at residues 501-522 (RGKSDSDSVNSVFSDTPFVAST) is disordered.

It belongs to the immunoglobulin superfamily. AMIGO family. Binds itself as well as AMIGO1 and AMIGO3.

Its subcellular location is the cell membrane. It localises to the nucleus. In terms of biological role, required for depolarization-dependent survival of cultured cerebellar granule neurons. May mediate homophilic as well as heterophilic cell-cell interaction with AMIGO1 or AMIGO3. May contribute to signal transduction through its intracellular domain. The chain is Amphoterin-induced protein 2 from Pongo abelii (Sumatran orangutan).